The following is a 996-amino-acid chain: Protein psiR (996 aa).

The N-terminal stretch at 1 to 21 is a signal peptide; that stretch reads MKKIILMLLLFSIFFILKSES. N79, N117, N323, N396, N428, N474, N500, N645, and N779 each carry an N-linked (GlcNAc...) asparagine glycan. The PA14 domain maps to 105–250; the sequence is QSLSNPNIYS…YDECGVCEGD (146 aa).

It belongs to the prespore-cell-inducing factor family.

It localises to the secreted. In Dictyostelium discoideum (Social amoeba), this protein is Protein psiR (psiR).